A 365-amino-acid polypeptide reads, in one-letter code: Cytoplasmic tRNA 2-thiolation protein 1 (365 aa).

Belongs to the TtcA family. CTU1/NCS6/ATPBD3 subfamily.

It localises to the cytoplasm. The protein operates within tRNA modification; 5-methoxycarbonylmethyl-2-thiouridine-tRNA biosynthesis. Its function is as follows. Plays a central role in 2-thiolation of mcm(5)S(2)U at tRNA wobble positions of tRNA(Lys), tRNA(Glu) and tRNA(Gln). Directly binds tRNAs and probably acts by catalyzing adenylation of tRNAs, an intermediate required for 2-thiolation. It is unclear whether it acts as a sulfurtransferase that transfers sulfur from thiocarboxylated URM1 onto the uridine of tRNAs at wobble position. Prior mcm(5) tRNA modification by the elongator complex is required for 2-thiolation. May also be involved in protein urmylation. This is Cytoplasmic tRNA 2-thiolation protein 1 from Yarrowia lipolytica (strain CLIB 122 / E 150) (Yeast).